Here is a 388-residue protein sequence, read N- to C-terminus: Succinate--CoA ligase [ADP-forming] subunit beta (388 aa).

Residues 9-244 enclose the ATP-grasp domain; that stretch reads KQLFSRYGLP…PSQEDPREAQ (236 aa). ATP contacts are provided by residues Lys-46, 53–55, Glu-99, Thr-102, and Glu-107; that span reads GRG. Residues Asn-199 and Asp-213 each coordinate Mg(2+). Substrate is bound by residues Asn-264 and 321–323; that span reads GIV.

This sequence belongs to the succinate/malate CoA ligase beta subunit family. Heterotetramer of two alpha and two beta subunits. It depends on Mg(2+) as a cofactor.

It carries out the reaction succinate + ATP + CoA = succinyl-CoA + ADP + phosphate. The catalysed reaction is GTP + succinate + CoA = succinyl-CoA + GDP + phosphate. It functions in the pathway carbohydrate metabolism; tricarboxylic acid cycle; succinate from succinyl-CoA (ligase route): step 1/1. In terms of biological role, succinyl-CoA synthetase functions in the citric acid cycle (TCA), coupling the hydrolysis of succinyl-CoA to the synthesis of either ATP or GTP and thus represents the only step of substrate-level phosphorylation in the TCA. The beta subunit provides nucleotide specificity of the enzyme and binds the substrate succinate, while the binding sites for coenzyme A and phosphate are found in the alpha subunit. The protein is Succinate--CoA ligase [ADP-forming] subunit beta of Proteus mirabilis (strain HI4320).